The following is a 92-amino-acid chain: Small ribosomal subunit protein uS19 (92 aa).

Belongs to the universal ribosomal protein uS19 family.

Its function is as follows. Protein S19 forms a complex with S13 that binds strongly to the 16S ribosomal RNA. The polypeptide is Small ribosomal subunit protein uS19 (Hyphomonas neptunium (strain ATCC 15444)).